Reading from the N-terminus, the 264-residue chain is uncharacterized protein (264 aa).

One can recognise an ABC transporter domain in the interval Leu3–Pro243. Gly35–Thr42 lines the ATP pocket.

The protein belongs to the ABC transporter superfamily.

This is an uncharacterized protein from Bacillus subtilis (strain 168).